Reading from the N-terminus, the 126-residue chain is Small ribosomal subunit protein uS12 (126 aa).

The residue at position 89 (Asp-89) is a 3-methylthioaspartic acid.

Belongs to the universal ribosomal protein uS12 family. As to quaternary structure, part of the 30S ribosomal subunit. Contacts proteins S8 and S17. May interact with IF1 in the 30S initiation complex.

With S4 and S5 plays an important role in translational accuracy. In terms of biological role, interacts with and stabilizes bases of the 16S rRNA that are involved in tRNA selection in the A site and with the mRNA backbone. Located at the interface of the 30S and 50S subunits, it traverses the body of the 30S subunit contacting proteins on the other side and probably holding the rRNA structure together. The combined cluster of proteins S8, S12 and S17 appears to hold together the shoulder and platform of the 30S subunit. This is Small ribosomal subunit protein uS12 from Polynucleobacter necessarius subsp. necessarius (strain STIR1).